A 97-amino-acid chain; its full sequence is CRISPR-associated endoribonuclease Cas2 1 (97 aa).

D12 serves as a coordination point for Mg(2+).

The protein belongs to the CRISPR-associated endoribonuclease Cas2 protein family. Homodimer, forms a heterotetramer with a Cas1 homodimer. Mg(2+) serves as cofactor.

In terms of biological role, CRISPR (clustered regularly interspaced short palindromic repeat) is an adaptive immune system that provides protection against mobile genetic elements (viruses, transposable elements and conjugative plasmids). CRISPR clusters contain sequences complementary to antecedent mobile elements and target invading nucleic acids. CRISPR clusters are transcribed and processed into CRISPR RNA (crRNA). Functions as a ssRNA-specific endoribonuclease. Involved in the integration of spacer DNA into the CRISPR cassette. This is CRISPR-associated endoribonuclease Cas2 1 from Francisella tularensis subsp. novicida (strain U112).